The sequence spans 597 residues: Elongation factor 4 (597 aa).

The tr-type G domain occupies 2–184 (DHIRNFSIIA…ALIAKVPPPK (183 aa)). Residues 14-19 (DHGKST) and 131-134 (NKID) each bind GTP.

It belongs to the TRAFAC class translation factor GTPase superfamily. Classic translation factor GTPase family. LepA subfamily.

It localises to the cell inner membrane. The catalysed reaction is GTP + H2O = GDP + phosphate + H(+). Required for accurate and efficient protein synthesis under certain stress conditions. May act as a fidelity factor of the translation reaction, by catalyzing a one-codon backward translocation of tRNAs on improperly translocated ribosomes. Back-translocation proceeds from a post-translocation (POST) complex to a pre-translocation (PRE) complex, thus giving elongation factor G a second chance to translocate the tRNAs correctly. Binds to ribosomes in a GTP-dependent manner. This Burkholderia vietnamiensis (strain G4 / LMG 22486) (Burkholderia cepacia (strain R1808)) protein is Elongation factor 4.